The chain runs to 145 residues: Putative pre-16S rRNA nuclease (145 aa).

Belongs to the YqgF nuclease family.

It localises to the cytoplasm. Functionally, could be a nuclease involved in processing of the 5'-end of pre-16S rRNA. The sequence is that of Putative pre-16S rRNA nuclease from Microcystis aeruginosa (strain NIES-843 / IAM M-2473).